The following is a 424-amino-acid chain: Histidine--tRNA ligase (424 aa).

Belongs to the class-II aminoacyl-tRNA synthetase family. In terms of assembly, homodimer.

It localises to the cytoplasm. It catalyses the reaction tRNA(His) + L-histidine + ATP = L-histidyl-tRNA(His) + AMP + diphosphate + H(+). The polypeptide is Histidine--tRNA ligase (Salmonella typhi).